The sequence spans 164 residues: MKTAVYPGSFDPITKGHLNIIKRASKVCDKLIVAVLVNPEKKGLFSVDERVEMIKRVTKNHSNVEVQCFSGLLIDFMKEKKSKVIIKGLRTMSDFEYEFKMALMNNKLDPNIETVFMMTNAKYSYLSSSSVKQVAMFGGCIKDLVPDEIIPDIKKKINHKKECI.

A substrate-binding site is contributed by Ser9. ATP contacts are provided by residues 9–10 (SF) and His17. Residues Lys41, Leu73, and Lys87 each contribute to the substrate site. ATP-binding positions include 88 to 90 (GLR), Glu98, and 123 to 129 (YSYLSSS).

Belongs to the bacterial CoaD family. In terms of assembly, homohexamer. Mg(2+) is required as a cofactor.

Its subcellular location is the cytoplasm. It catalyses the reaction (R)-4'-phosphopantetheine + ATP + H(+) = 3'-dephospho-CoA + diphosphate. It participates in cofactor biosynthesis; coenzyme A biosynthesis; CoA from (R)-pantothenate: step 4/5. Its function is as follows. Reversibly transfers an adenylyl group from ATP to 4'-phosphopantetheine, yielding dephospho-CoA (dPCoA) and pyrophosphate. In Clostridium botulinum (strain 657 / Type Ba4), this protein is Phosphopantetheine adenylyltransferase.